The sequence spans 65 residues: Large ribosomal subunit protein uL30 (65 aa).

This sequence belongs to the universal ribosomal protein uL30 family. Part of the 50S ribosomal subunit.

This chain is Large ribosomal subunit protein uL30, found in Onion yellows phytoplasma (strain OY-M).